A 109-amino-acid chain; its full sequence is Nucleoid-associated protein swp_1717 (109 aa).

Residues 88 to 109 (QKDKMAEVTGGMQLPPGMKMPF) are disordered.

This sequence belongs to the YbaB/EbfC family. In terms of assembly, homodimer.

Its subcellular location is the cytoplasm. The protein localises to the nucleoid. Functionally, binds to DNA and alters its conformation. May be involved in regulation of gene expression, nucleoid organization and DNA protection. The sequence is that of Nucleoid-associated protein swp_1717 from Shewanella piezotolerans (strain WP3 / JCM 13877).